The sequence spans 415 residues: MSNVKNLAKKAKIAARTLSVLDTEAKNSALEAIASQLLADKETILQANGKDLDNGKKMGLSPSLLDRLALTSARIDGMVEGIKQVVELEDPVGQVMETWQRPNGLEIAKVRVPMGVIGMVYEARPNVTVDTCALCLKAGSAVVLRGSSSALNSNRALVSAIKKGLAKTAIPEDTVQFVDSEDRGAVDEMLRLNGLLDLVIPRGGAGLIRRVVENATVPVIETGVGNCHVYVDVDADPGMALEILLNAKCQRYGVCNAAESLLVHEGIAANWLPGAVQELNTRGVEIRGCSKVVEILSGVKKAEDSDWATEFLSPVLAIKVVKDFQDALDHIQQYSSGHSESIVTNNQNTAAEFLRQVDAAAVYHNASTRFTDGFEYGFGAEIGISTQKLHARGPMGLRELTSYKYVVKGTGQVRP.

It belongs to the gamma-glutamyl phosphate reductase family.

Its subcellular location is the cytoplasm. The catalysed reaction is L-glutamate 5-semialdehyde + phosphate + NADP(+) = L-glutamyl 5-phosphate + NADPH + H(+). Its pathway is amino-acid biosynthesis; L-proline biosynthesis; L-glutamate 5-semialdehyde from L-glutamate: step 2/2. Catalyzes the NADPH-dependent reduction of L-glutamate 5-phosphate into L-glutamate 5-semialdehyde and phosphate. The product spontaneously undergoes cyclization to form 1-pyrroline-5-carboxylate. This is Gamma-glutamyl phosphate reductase from Desulforamulus reducens (strain ATCC BAA-1160 / DSM 100696 / MI-1) (Desulfotomaculum reducens).